A 102-amino-acid chain; its full sequence is uncharacterized protein (102 aa).

A run of 3 helical transmembrane segments spans residues 1–21, 42–62, and 68–88; these read MVPL…LRPV, SIID…LILV, and SIHA…FSIV.

It is found in the membrane. This is an uncharacterized protein from Saccharomyces cerevisiae (strain ATCC 204508 / S288c) (Baker's yeast).